Here is a 170-residue protein sequence, read N- to C-terminus: Cathelicidin antimicrobial peptide (170 aa).

The signal sequence occupies residues methionine 1–alanine 30. A propeptide spans glutamine 31–arginine 131 (cathelin-like domain (CLD)). Intrachain disulfides connect cysteine 86–cysteine 97 and cysteine 108–cysteine 125. Residues phenylalanine 150 to glutamine 162 are active core.

It belongs to the cathelicidin family. As to quaternary structure, monomer, homodimer or homotrimer (in vitro). Oligomerizes as tetra- or hexamer in solution (in vitro). Proteolytically cleaved by proteinase PRTN3 into antibacterial peptide LL-37. Proteolytically cleaved by cathepsin CTSG and neutrophil elastase ELANE. In terms of processing, resistant to proteolytic degradation in solution, and when bound to both zwitterionic (mimicking mammalian membranes) and negatively charged membranes (mimicking bacterial membranes). Post-translationally, after secretion onto the skin surface, the CAMP gene product is processed by a serine protease-dependent mechanism into multiple novel antimicrobial peptides distinct from and shorter than cathelicidin LL-37. These peptides show enhanced antimicrobial action, acquiring the ability to kill skin pathogens such as S.aureus, E.coli and C.albicans. These peptides have lost the ability to stimulate CXCL8/IL8 release from keratinocytes. The peptides act synergistically, killing bacteria at lower concentrations when present together, and maintain activity at increased salt condition.

It is found in the secreted. The protein localises to the vesicle. Its function is as follows. Antimicrobial protein that is an integral component of the innate immune system. Binds to bacterial lipopolysaccharides (LPS). Acts via neutrophil N-formyl peptide receptors to enhance the release of CXCL2. Postsecretory processing generates multiple cathelicidin antimicrobial peptides with various lengths which act as a topical antimicrobial defense in sweat on skin. The unprocessed precursor form, cathelicidin antimicrobial peptide, inhibits the growth of Gram-negative E.coli and E.aerogenes with efficiencies comparable to that of the mature peptide LL-37 (in vitro). Antimicrobial peptide that is an integral component of the innate immune system. Binds to bacterial lipopolysaccharides (LPS). Causes membrane permeabilization by forming transmembrane pores (in vitro). Causes lysis of E.coli. Exhibits antimicrobial activity against Gram-negative bacteria such as P.aeruginosa, S.typhimurium, E.aerogenes, E.coli and P.syringae, Gram-positive bacteria such as L.monocytogenes, S.epidermidis, S.pyogenes and S.aureus, as well as vancomycin-resistant enterococci (in vitro). Exhibits antimicrobial activity against methicillin-resistant S.aureus, P.mirabilis, and C.albicans in low-salt media, but not in media containing 100 mM NaCl (in vitro). Forms chiral supramolecular assemblies with quinolone signal (PQS) molecules of P.aeruginosa, which may lead to interference of bacterial quorum signaling and perturbance of bacterial biofilm formation. May form supramolecular fiber-like assemblies on bacterial membranes. Induces cytokine and chemokine producation as well as TNF/TNFA and CSF2/GMCSF production in normal human keratinocytes. Exhibits hemolytic activity against red blood cells. Functionally, exhibits antimicrobial activity against E.coli and B.megaterium (in vitro). In Nomascus gabriellae (Red-cheeked gibbon), this protein is Cathelicidin antimicrobial peptide.